The primary structure comprises 138 residues: ATP synthase epsilon chain (138 aa).

This sequence belongs to the ATPase epsilon chain family. In terms of assembly, F-type ATPases have 2 components, CF(1) - the catalytic core - and CF(0) - the membrane proton channel. CF(1) has five subunits: alpha(3), beta(3), gamma(1), delta(1), epsilon(1). CF(0) has three main subunits: a, b and c.

It localises to the cell inner membrane. Its function is as follows. Produces ATP from ADP in the presence of a proton gradient across the membrane. This chain is ATP synthase epsilon chain, found in Geobacter sulfurreducens (strain ATCC 51573 / DSM 12127 / PCA).